The primary structure comprises 186 residues: Mitoferrin-2B (186 aa).

The Solcar repeat unit spans residues 75–163 (SNVTAHMLAG…FACYEKLKKT (89 aa)). Transmembrane regions (helical) follow at residues 77–96 (VTAHMLAGAVAGVMEHCLMY), 137–157 (RGLNVTATGAGPAHALYFACY), and 172–185 (GNCHVANGIDNSCP).

This sequence belongs to the mitochondrial carrier (TC 2.A.29) family.

The protein localises to the mitochondrion inner membrane. It carries out the reaction Fe(2+)(in) = Fe(2+)(out). In terms of biological role, mitochondrial iron transporter that mediates iron uptake. Probably required for heme synthesis of hemoproteins and Fe-S cluster assembly in non-erythroid cells. The sequence is that of Mitoferrin-2B (slc25a28-b) from Xenopus laevis (African clawed frog).